The sequence spans 167 residues: Peptidoglycan-binding-like protein (167 aa).

The signal sequence occupies residues 1–24 (MRSPKVKFLTIFTLSILITKMSFA).

The protein belongs to the IagB/IpgF/P19 family.

It is found in the periplasm. This is Peptidoglycan-binding-like protein (pbl) from Escherichia coli O157:H7.